The following is a 140-amino-acid chain: Large ribosomal subunit protein uL11 (140 aa).

It belongs to the universal ribosomal protein uL11 family. Part of the ribosomal stalk of the 50S ribosomal subunit. Interacts with L10 and the large rRNA to form the base of the stalk. L10 forms an elongated spine to which L12 dimers bind in a sequential fashion forming a multimeric L10(L12)X complex. Post-translationally, one or more lysine residues are methylated.

Forms part of the ribosomal stalk which helps the ribosome interact with GTP-bound translation factors. The polypeptide is Large ribosomal subunit protein uL11 (Lawsonia intracellularis (strain PHE/MN1-00)).